Here is a 222-residue protein sequence, read N- to C-terminus: WAP four-disulfide core domain protein 1 (222 aa).

A signal peptide spans 1–32; the sequence is MDSRMLSDQRFCRRIFAAALCVLVLLADSGCA. The WAP domain maps to 61–110; the sequence is HYQKNDRCPPPPQTLPDRACEVPSCRSDSECERHKRCCYNGCIYACLESV. Disulfide bonds link cysteine 68–cysteine 98, cysteine 80–cysteine 102, cysteine 85–cysteine 97, and cysteine 91–cysteine 106.

The protein resides in the secreted. Has growth inhibitory activity. The protein is WAP four-disulfide core domain protein 1 (WFDC1) of Gallus gallus (Chicken).